Here is a 113-residue protein sequence, read N- to C-terminus: Protein C21/B27 (113 aa).

This is Protein C21/B27 from Homo sapiens (Human).